A 225-amino-acid chain; its full sequence is Holliday junction branch migration complex subunit RuvA (225 aa).

Positions 1–71 (MISWINGELV…EDSDLLFGFT (71 aa)) are domain I. Residues 72–150 (SKDQKFFFIE…SKIQIEEEKG (79 aa)) form a domain II region. Positions 151 to 161 (QEEFEITNPEI) are flexible linker. Residues 161–225 (IYKLMEDLQL…LDQGNSNLAR (65 aa)) are domain III.

Belongs to the RuvA family. In terms of assembly, homotetramer. Forms an RuvA(8)-RuvB(12)-Holliday junction (HJ) complex. HJ DNA is sandwiched between 2 RuvA tetramers; dsDNA enters through RuvA and exits via RuvB. An RuvB hexamer assembles on each DNA strand where it exits the tetramer. Each RuvB hexamer is contacted by two RuvA subunits (via domain III) on 2 adjacent RuvB subunits; this complex drives branch migration. In the full resolvosome a probable DNA-RuvA(4)-RuvB(12)-RuvC(2) complex forms which resolves the HJ.

The protein localises to the cytoplasm. Its function is as follows. The RuvA-RuvB-RuvC complex processes Holliday junction (HJ) DNA during genetic recombination and DNA repair, while the RuvA-RuvB complex plays an important role in the rescue of blocked DNA replication forks via replication fork reversal (RFR). RuvA specifically binds to HJ cruciform DNA, conferring on it an open structure. The RuvB hexamer acts as an ATP-dependent pump, pulling dsDNA into and through the RuvAB complex. HJ branch migration allows RuvC to scan DNA until it finds its consensus sequence, where it cleaves and resolves the cruciform DNA. In Prochlorococcus marinus (strain MIT 9215), this protein is Holliday junction branch migration complex subunit RuvA.